Reading from the N-terminus, the 398-residue chain is Maltoporin (398 aa).

The signal sequence occupies residues 1–30 (MTDKNNKRLFKVAPLATAIAASLFTVNASA).

This sequence belongs to the porin LamB (TC 1.B.3) family. As to quaternary structure, homotrimer formed of three 18-stranded antiparallel beta-barrels, containing three independent channels.

The protein localises to the cell outer membrane. It catalyses the reaction beta-maltose(in) = beta-maltose(out). Its function is as follows. Involved in the transport of maltose and maltodextrins. The protein is Maltoporin of Hahella chejuensis (strain KCTC 2396).